Reading from the N-terminus, the 253-residue chain is MNLIDKKFEELKIKGKKAFIGYTTFGYPTKGETLDYIKLIYSYVDVLELGFPFSDPIADGEVIQRASVKALKEDIKLDHLFYSIEKFKKDKPIAIMLYANTVYKRGIEKFFKDCKDFGADAVIIPDISYEESAEFKAACRENGVHYIDLISISSIERAKMIAKTSKGFVYCVTRKGVTGFKGEIDKSIYELLSELKKVTSTPLAVGFGIKSKEDVLKLKEVADGIVIGSAIINKIDEGKEDLVSFLETIRSVL.

Catalysis depends on proton acceptor residues Glu-48 and Asp-59.

The protein belongs to the TrpA family. In terms of assembly, tetramer of two alpha and two beta chains.

The enzyme catalyses (1S,2R)-1-C-(indol-3-yl)glycerol 3-phosphate + L-serine = D-glyceraldehyde 3-phosphate + L-tryptophan + H2O. The protein operates within amino-acid biosynthesis; L-tryptophan biosynthesis; L-tryptophan from chorismate: step 5/5. In terms of biological role, the alpha subunit is responsible for the aldol cleavage of indoleglycerol phosphate to indole and glyceraldehyde 3-phosphate. This is Tryptophan synthase alpha chain from Caldicellulosiruptor saccharolyticus (strain ATCC 43494 / DSM 8903 / Tp8T 6331).